Consider the following 447-residue polypeptide: Serine/threonine-protein phosphatase 2A 55 kDa regulatory subunit B delta isoform (447 aa).

WD repeat units follow at residues 26 to 65, 91 to 132, 175 to 213, 224 to 264, 283 to 321, 338 to 379, and 414 to 447; these read AEADIISTVEFNYSGELLATGDKGGRVVIFQREQESKNRP, EIEE…KRAE, AHTYHINSISVNSDYETYLSADDLRINLWHLEITDRSFN, ELTE…LCDR, EIISSISDVKFSHSGRYMMTRDYLSVKVWDLNMENRPVE, ENDC…DITL, and DFNKKILHTAWHPKENVIAVAATNNLYIFQDKMN.

Belongs to the phosphatase 2A regulatory subunit B family. As to quaternary structure, PP2A consists of a common heterodimeric core enzyme, composed of a 36 kDa catalytic subunit (subunit C) and a 65 kDa constant regulatory subunit (PR65 or subunit A), that associates with a variety of regulatory subunits.

It is found in the cytoplasm. Substrate-recognition subunit of protein phosphatase 2A (PP2A) that plays a key role in cell cycle by controlling mitosis entry and exit. The activity of PP2A complexes containing PPP2R2D (PR55-delta) fluctuate during the cell cycle: the activity is high in interphase and low in mitosis. The polypeptide is Serine/threonine-protein phosphatase 2A 55 kDa regulatory subunit B delta isoform (ppp2r2d) (Danio rerio (Zebrafish)).